The following is a 677-amino-acid chain: MAHRSPALCLLLLHAACLCLAQLRGPPGEPGPRGPPGPPGVPGADGIDGDKGSPGAPGSPGAKGEPGAPGPDGPPGKPGLDGLTGAKGSRGPWGGQGLKGQPGLPGPPGLPGPSLPGPPGLPGQVGLPGEIGVPGPKGDPGPDGPRGPPGPPGKPGPPGHIQGVEGSADFLCPTNCPPGPKGPQGLQGLKGHRGRPGALGEPGQQGKQGPKGDVGVSGEQGVPGPPGPQGQRGYPGMAGPKGETGPAGYKGMVGTIGAAGRPGREGPKGPPGDPGEKGELGGRGIRGPQGDIGPKGDMGLPGIDGKDGTPGIPGVKGTAGQPGRPGPPGHRGQAGLPGQPGSKGGPGDKGEVGARGQQGITGTPGLDGEPGPPGDAGTAGVPGLKGDRGERGPVGAPGEAGQSGPKGEQGPPGIPGPQGLPGVKGDKGSPGKTGPKGSTGDPGVHGLAGVKGEKGESGEPGPKGQQGIQGELGFPGPSGDAGSPGVRGYPGPPGPRGLLGERGVPGMPGQRGVAGRDAGDQHIIDVVLKMMQEQLAEVAVSAKRAALGGVGAMGPPGPPGPPGPPGEQGLHGPMGPRGVPGLLGAAGQIGNIGPKGKRGEKGERGDTGRGHPGMPGPPGIPGLPGIPGHALAGKDGERGPPGVPGDAGRPGSPGPAGLPGFCEPAACLGALPTPRHG.

The first 21 residues, 1–21 (MAHRSPALCLLLLHAACLCLA), serve as a signal peptide directing secretion. A triple-helical region 4 (COL4) region spans residues 25 to 161 (GPPGEPGPRG…PGKPGPPGHI (137 aa)). The span at 28 to 41 (GEPGPRGPPGPPGV) shows a compositional bias: pro residues. Residues 28-516 (GEPGPRGPPG…MPGQRGVAGR (489 aa)) are disordered. A compositionally biased stretch (low complexity) spans 53 to 66 (SPGAPGSPGAKGEP). Positions 68–77 (APGPDGPPGK) are enriched in pro residues. The segment covering 91-100 (GPWGGQGLKG) has biased composition (gly residues). Pro residues-rich tracts occupy residues 104 to 121 (LPGP…PPGL) and 137 to 158 (KGDP…PGPP). Pro-158 carries the post-translational modification 4-hydroxyproline. The tract at residues 162-178 (QGVEGSADFLCPTNCPP) is nonhelical region 4 (NC4). Ser-167 carries O-linked (Xyl...) (glycosaminoglycan) serine glycosylation. Pro-178 bears the 4-hydroxyproline mark. Positions 179-517 (GPKGPQGLQG…PGQRGVAGRD (339 aa)) are triple-helical region 3 (COL3). Lys-181 is subject to 5-hydroxylysine. O-linked (Gal...) hydroxylysine glycosylation is present at Lys-181. Lys-190 bears the Allysine mark. 3 stretches are compositionally biased toward low complexity: residues 363 to 382 (TPGL…AGVP), 430 to 442 (PGKT…TGDP), and 496 to 505 (RGLLGERGVP). A nonhelical region 3 (NC3) region spans residues 518-547 (AGDQHIIDVVLKMMQEQLAEVAVSAKRAAL). The tract at residues 548 to 630 (GGVGAMGPPG…PGLPGIPGHA (83 aa)) is triple-helical region 2 (COL2). Residues 550–657 (VGAMGPPGPP…GRPGSPGPAG (108 aa)) are disordered. Positions 555 to 565 (PPGPPGPPGPP) are enriched in pro residues. Residues 597–609 (KRGEKGERGDTGR) show a composition bias toward basic and acidic residues. Residues 631 to 632 (LA) are nonhelical region 2 (NC2). Positions 633 to 662 (GKDGERGPPGVPGDAGRPGSPGPAGLPGFC) are triple-helical region 1 (COL1). Residues 663-677 (EPAACLGALPTPRHG) form a nonhelical region 1 (NC1) region.

The protein belongs to the fibril-associated collagens with interrupted helices (FACIT) family. Heterotrimer of an alpha 1(IX), an alpha 2(IX) and an alpha 3(IX) chain. The chains are linked to each other by interchain disulfide bonds. Trimers are also cross-linked via hydroxylysines. Post-translationally, covalently linked to the telopeptides of type II collagen by lysine-derived cross-links. Prolines at the third position of the tripeptide repeating unit (G-X-Y) are hydroxylated in some or all of the chains.

The protein resides in the secreted. It is found in the extracellular space. The protein localises to the extracellular matrix. Functionally, structural component of hyaline cartilage and vitreous of the eye. This Gallus gallus (Chicken) protein is Collagen alpha-2(IX) chain (COL9A2).